A 603-amino-acid polypeptide reads, in one-letter code: MAATDNRKVVEGVHKMTPSEAFVETCVANGVSEMFGIMGSAFMDAMDIFAPAGIRLIPVVHEQGAAHMADGYARVSGRHGVVIGQNGPGISNCVTGIAAAYWAHSPVVIVTPETGTMGMGLGGFQEANQLPMFQEFTKYQGHVCNPKRMAEFTGRVFDRAMSEMGPTQLNIPRDYFYGEIECEIPKPMRVDRGHGGEASLQAAVELLKTAKFPVILAGGGVVMGDAVEEAKQLAERLGAPVATGYLRNDAFPAKHPLWAGPLGYQGSKAAMKLIAQADVVIALGSRMGPFGTLPQHGMDYWPKAAKIIQIEADHTNLGLVKKIAVGINGDAKAVAAELSRRLADVTLGCDATKAARADTIATEKAAWEKELDGWTHERDPYSLDMIEEAKGERTPTGGSYLHPRQVLRELEKAMPARVMVSTDIGNINSVANSYLRFDEPRSFFAPMSFGNCGYALPTIIGAKCAAPDRPAIAYAGDGAWGMSMMEIMTAVRHDIPVTAVVFHNRQWGAEKKNQVDFYNRRFVAGELESESFSDIAKAMGAEGIVVDHIEDVGPALQKAIDMQMKEGKTCVIEIMCTRELGDPFRRDALSKPVRMLDKYKDYV.

The protein belongs to the TPP enzyme family. In terms of assembly, homodimer or homotetramer. It depends on Mg(2+) as a cofactor. Requires thiamine diphosphate as cofactor.

The protein resides in the cytoplasm. The catalysed reaction is acetyl phosphate + sulfite + H(+) = sulfoacetaldehyde + phosphate. It functions in the pathway organosulfur degradation; taurine degradation via aerobic pathway; acetyl phosphate and sulfite from taurine: step 2/2. The chain is Sulfoacetaldehyde acetyltransferase (xsc) from Alcaligenes xylosoxydans xylosoxydans (Achromobacter xylosoxidans).